The following is a 451-amino-acid chain: UPF0210 protein lin0538 (451 aa).

The protein belongs to the UPF0210 family. In terms of assembly, homodimer.

This chain is UPF0210 protein lin0538, found in Listeria innocua serovar 6a (strain ATCC BAA-680 / CLIP 11262).